The primary structure comprises 103 residues: Large ribosomal subunit protein bL21 (103 aa).

This sequence belongs to the bacterial ribosomal protein bL21 family. In terms of assembly, part of the 50S ribosomal subunit. Contacts protein L20.

Functionally, this protein binds to 23S rRNA in the presence of protein L20. The chain is Large ribosomal subunit protein bL21 from Shewanella woodyi (strain ATCC 51908 / MS32).